Consider the following 586-residue polypeptide: Inner membrane protein YejM (586 aa).

At 1 to 20 (MVTHRQRYREKVSQMVSWGH) the chain is on the cytoplasmic side. Residues 21–43 (WFALFNILLSLVIGSRYLFIADW) traverse the membrane as a helical segment. At 44–57 (PTTLAGRIYSYVSI) the chain is on the periplasmic side. Residues 58 to 80 (IGHFSFLVFATYLLILFPLTFIV) form a helical membrane-spanning segment. Topologically, residues 81–84 (GSQR) are cytoplasmic. The helical transmembrane segment at 85–103 (LMRFLSVILATAGMTLLLI) threads the bilayer. Over 104–134 (DSEVFTRFHLHLNPIVWQLVINPDENEMARD) the chain is Periplasmic. Residues 135 to 157 (WQLMFISVPVILLLELVFATWSW) traverse the membrane as a helical segment. Residues 158–168 (QKLRSLTRRRR) are Cytoplasmic-facing. The helical transmembrane segment at 169 to 191 (FARPLAAFLFIAFIASHVVYIWA) threads the bilayer. The Periplasmic portion of the chain corresponds to 192–586 (DANFYRPITM…LTDEKRFIAN (395 aa)).

The protein to H.influenzae HI_0842.

The protein localises to the cell inner membrane. This Escherichia coli O157:H7 protein is Inner membrane protein YejM (yejM).